We begin with the raw amino-acid sequence, 305 residues long: tRNA dimethylallyltransferase (305 aa).

11–18 is a binding site for ATP; the sequence is GPTAVGKT. Substrate is bound at residue 13–18; the sequence is TAVGKT. An interaction with substrate tRNA region spans residues 36-39; the sequence is DSMQ.

Belongs to the IPP transferase family. As to quaternary structure, monomer. It depends on Mg(2+) as a cofactor.

The enzyme catalyses adenosine(37) in tRNA + dimethylallyl diphosphate = N(6)-dimethylallyladenosine(37) in tRNA + diphosphate. Catalyzes the transfer of a dimethylallyl group onto the adenine at position 37 in tRNAs that read codons beginning with uridine, leading to the formation of N6-(dimethylallyl)adenosine (i(6)A). In Listeria monocytogenes serovar 1/2a (strain ATCC BAA-679 / EGD-e), this protein is tRNA dimethylallyltransferase.